The following is a 284-amino-acid chain: Chaperone protein dnaJ 6 (284 aa).

3 disordered regions span residues 1-30 (MGRKKKSRASTTEEDEIEMDNAGPSSETSL), 196-221 (NKISETKPPTSPLRKRKKKKSAAKDS), and 252-284 (GGDAEAEPTEEEFEAAQRRIESKRKPSKKSRGK). A Nuclear localization signal motif is present at residues 3-6 (RKKK). The J domain occupies 29–94 (SLYEVLGVER…EKRAVYDQTG (66 aa)). Residues 209-215 (RKRKKKK) carry the Nuclear localization signal motif. A compositionally biased stretch (acidic residues) spans 255-265 (AEAEPTEEEFE). Residues 266–275 (AAQRRIESKR) show a composition bias toward basic and acidic residues.

It belongs to the DnaJ family. C/III subfamily. In terms of tissue distribution, highly expressed in leaves, flowers and siliques, and to lower extent in roots.

Its subcellular location is the nucleus. Its function is as follows. Plays a continuous role in plant development probably in the structural organization of compartments. This Arabidopsis thaliana (Mouse-ear cress) protein is Chaperone protein dnaJ 6 (ATJ6).